Consider the following 338-residue polypeptide: Glycerol-3-phosphate dehydrogenase [NAD(P)+] (338 aa).

The NADPH site is built by S13, W14, and K108. The sn-glycerol 3-phosphate site is built by K108, G139, and S141. A143 lines the NADPH pocket. 5 residues coordinate sn-glycerol 3-phosphate: K194, D247, S257, R258, and N259. K194 acts as the Proton acceptor in catalysis. R258 provides a ligand contact to NADPH. Residues V282 and E284 each coordinate NADPH.

The protein belongs to the NAD-dependent glycerol-3-phosphate dehydrogenase family.

The protein localises to the cytoplasm. It catalyses the reaction sn-glycerol 3-phosphate + NAD(+) = dihydroxyacetone phosphate + NADH + H(+). It carries out the reaction sn-glycerol 3-phosphate + NADP(+) = dihydroxyacetone phosphate + NADPH + H(+). It functions in the pathway membrane lipid metabolism; glycerophospholipid metabolism. In terms of biological role, catalyzes the reduction of the glycolytic intermediate dihydroxyacetone phosphate (DHAP) to sn-glycerol 3-phosphate (G3P), the key precursor for phospholipid synthesis. This Streptococcus pyogenes serotype M2 (strain MGAS10270) protein is Glycerol-3-phosphate dehydrogenase [NAD(P)+].